A 298-amino-acid polypeptide reads, in one-letter code: ATP synthase gamma chain (298 aa).

The protein belongs to the ATPase gamma chain family. As to quaternary structure, F-type ATPases have 2 components, CF(1) - the catalytic core - and CF(0) - the membrane proton channel. CF(1) has five subunits: alpha(3), beta(3), gamma(1), delta(1), epsilon(1). CF(0) has three main subunits: a, b and c.

The protein resides in the cell inner membrane. Its function is as follows. Produces ATP from ADP in the presence of a proton gradient across the membrane. The gamma chain is believed to be important in regulating ATPase activity and the flow of protons through the CF(0) complex. The polypeptide is ATP synthase gamma chain (Francisella tularensis subsp. holarctica (strain LVS)).